The primary structure comprises 432 residues: Tol-Pal system protein TolB (432 aa).

The signal sequence occupies residues 1 to 22 (MMFKKCLSVLFTCLIFISSARA).

Belongs to the TolB family. The Tol-Pal system is composed of five core proteins: the inner membrane proteins TolA, TolQ and TolR, the periplasmic protein TolB and the outer membrane protein Pal. They form a network linking the inner and outer membranes and the peptidoglycan layer.

The protein localises to the periplasm. Functionally, part of the Tol-Pal system, which plays a role in outer membrane invagination during cell division and is important for maintaining outer membrane integrity. This Marinomonas sp. (strain MWYL1) protein is Tol-Pal system protein TolB.